The sequence spans 225 residues: Urease accessory protein UreE (225 aa).

Positions 171 to 215 are enriched in basic and acidic residues; it reads HHGHEHSHDHEHGHSHAAHEHSHGHDHTHGHDHDHGDHVHDESCG. The segment at 171 to 225 is disordered; it reads HHGHEHSHDHEHGHSHAAHEHSHGHDHTHGHDHDHGDHVHDESCGHGHHHHHAHR. Residues 216-225 show a composition bias toward basic residues; it reads HGHHHHHAHR.

Belongs to the UreE family.

It localises to the cytoplasm. Involved in urease metallocenter assembly. Binds nickel. Probably functions as a nickel donor during metallocenter assembly. The sequence is that of Urease accessory protein UreE from Paraburkholderia xenovorans (strain LB400).